The chain runs to 149 residues: Large ribosomal subunit protein uL15A (149 aa).

The tract at residues 21–40 (RIGKHRKQRGGRGNAGGQHH) is disordered.

This sequence belongs to the universal ribosomal protein uL15 family. In terms of assembly, component of the large ribosomal subunit.

The protein localises to the cytoplasm. It is found in the cytosol. It localises to the endoplasmic reticulum. Its function is as follows. Component of the large ribosomal subunit. The ribosome is a large ribonucleoprotein complex responsible for the synthesis of proteins in the cell. The protein is Large ribosomal subunit protein uL15A (rpl27a-1) of Entamoeba histolytica (strain ATCC 30459 / HM-1:IMSS / ABRM).